The following is a 56-amino-acid chain: MLTWALIFLVVAVVAALFGFGGIAGAAASIAQILFFVFLVLLVISLIMHFTRRSRL.

The next 2 membrane-spanning stretches (helical) occupy residues 4-24 (WALIFLVVAVVAALFGFGGIA) and 30-50 (IAQILFFVFLVLLVISLIMHF).

This sequence belongs to the UPF0391 family.

It localises to the cell membrane. This chain is UPF0391 membrane protein Rru_A0119, found in Rhodospirillum rubrum (strain ATCC 11170 / ATH 1.1.1 / DSM 467 / LMG 4362 / NCIMB 8255 / S1).